The chain runs to 312 residues: Mas-related G-protein coupled receptor member B3 (312 aa).

Residues 1-31 (MALRTSLITTTAPDKTSLPISICIIKFQVMN) lie on the Extracellular side of the membrane. A helical transmembrane segment spans residues 32–52 (LLSITISPVGMVLNIIVLWFL). Residues 53 to 67 (GFQICRNAFSAYILN) lie on the Cytoplasmic side of the membrane. Residues 68–88 (LAVADFLFLCSHSIFSFLIVC) form a helical membrane-spanning segment. The Extracellular segment spans residues 89–106 (KLHYFLFYIRQLLDTVTM). The chain crosses the membrane as a helical span at residues 107–127 (FAYVFGLSITTIISIECCLSI). At 128–140 (MWPIWYHCQRPRH) the chain is on the cytoplasmic side. The helical transmembrane segment at 141–161 (TSAVICVLLWALSLLFPALQM) threads the bilayer. At 162–180 (EKCSVLFNTFEYSWCGIIN) the chain is on the extracellular side. The helical transmembrane segment at 181-201 (IISGAWLVVLFVVLCGFSLIL) threads the bilayer. Residues 202-220 (LLRISCGSQQIPVTRLNVT) are Cytoplasmic-facing. The chain crosses the membrane as a helical span at residues 221 to 241 (IALRVLLLLIFGIPFGIFWIV). Over 242 to 259 (DKWNEENFFVRACGFSHH) the chain is Extracellular. Residues 260-280 (ILYVYCINICVNATIYFLVGS) traverse the membrane as a helical segment. Residues 281-312 (IRHGKFQKMTLKLILQRAIQGTPEEEGGERGP) are Cytoplasmic-facing.

This sequence belongs to the G-protein coupled receptor 1 family. Mas subfamily.

The protein localises to the membrane. Orphan receptor. Probably involved in the function of nociceptive neurons. May regulate nociceptor function and/or development, including the sensation or modulation of pain. The sequence is that of Mas-related G-protein coupled receptor member B3 (Mrgprb3) from Mus musculus (Mouse).